The following is a 338-amino-acid chain: Ferrochelatase (338 aa).

Fe cation is bound by residues His-210 and Glu-291.

This sequence belongs to the ferrochelatase family.

Its subcellular location is the cytoplasm. The catalysed reaction is heme b + 2 H(+) = protoporphyrin IX + Fe(2+). It functions in the pathway porphyrin-containing compound metabolism; protoheme biosynthesis; protoheme from protoporphyrin-IX: step 1/1. Its function is as follows. Catalyzes the ferrous insertion into protoporphyrin IX. The sequence is that of Ferrochelatase from Helicobacter acinonychis (strain Sheeba).